Reading from the N-terminus, the 610-residue chain is Propanediol dehydratase-reactivating factor large subunit (610 aa).

An ATP-binding site is contributed by 11–13 (NSS). Thr105, Asp166, and Asp183 together coordinate Mg(2+). ATP contacts are provided by residues 459–462 (EEIK), 557–558 (GS), and Arg591.

It belongs to the DdrA/PduG family. As to quaternary structure, forms a heterotetramer PduG(2)/PduH(2). Requires Mg(2+) as cofactor.

It localises to the bacterial microcompartment. It catalyses the reaction ATP + H2O = ADP + phosphate + H(+). It participates in polyol metabolism; 1,2-propanediol degradation. Functionally, large subunit of the propanediol dehydratase-reactivating factor (DDR), which reactivates suicidally inhibited adenosylcobalamin-dependent propanediol dehydratase (diol dehydratase, DDH) found in the bacterial microcompartment (BMC) dedicated to 1,2-propanediol (1,2-PD) degradation. Reactivates inactivated DDH in the presence of ATP, Mg(2+) and free adenosylcobalamin (AdoCbl), by mediating the exchange of the tightly bound damaged cofactor AdoCbl for a free intact one. This subunit contains the adenosine nucleotide binding site. Its function is as follows. Expression of a cosmid containing the full 21-gene pdu operon in E.coli allows E.coli to grow on 1,2-propanediol (1,2-PD) with the appearance of bacterial microcompartments (BMC) in its cytoplasm. In terms of biological role, the 1,2-PD-specific bacterial microcompartment (BMC) concentrates low levels of 1,2-PD catabolic enzymes, concentrates volatile reaction intermediates thus enhancing pathway flux and keeps the level of toxic, mutagenic propionaldehyde low. This chain is Propanediol dehydratase-reactivating factor large subunit, found in Citrobacter freundii.